A 126-amino-acid chain; its full sequence is Small ribosomal subunit protein uS13 (126 aa).

The disordered stretch occupies residues 95-126; sequence GLPVRGQRTRTNARTRKGPRKTVAGKKKAPRK.

This sequence belongs to the universal ribosomal protein uS13 family. Part of the 30S ribosomal subunit. Forms a loose heterodimer with protein S19. Forms two bridges to the 50S subunit in the 70S ribosome.

In terms of biological role, located at the top of the head of the 30S subunit, it contacts several helices of the 16S rRNA. In the 70S ribosome it contacts the 23S rRNA (bridge B1a) and protein L5 of the 50S subunit (bridge B1b), connecting the 2 subunits; these bridges are implicated in subunit movement. Contacts the tRNAs in the A and P-sites. The chain is Small ribosomal subunit protein uS13 (rpsM) from Thermus thermophilus (strain ATCC BAA-163 / DSM 7039 / HB27).